Reading from the N-terminus, the 60-residue chain is Homeobox protein EgHBX4 (60 aa).

The segment at residues 1–60 (SRRERTIYTPEQLEAMEEVFGVNRYPDVSMREELASRLGINESKIQVWFKNRRAKLRNLE) is a DNA-binding region (homeobox).

It belongs to the paired homeobox family. Bicoid subfamily.

It is found in the nucleus. This Echinococcus granulosus (Hydatid tapeworm) protein is Homeobox protein EgHBX4 (HBX4).